We begin with the raw amino-acid sequence, 278 residues long: Probable endonuclease 4 (278 aa).

Zn(2+)-binding residues include H70, H108, E143, D176, H179, H210, D223, H225, and E255.

This sequence belongs to the AP endonuclease 2 family. Zn(2+) is required as a cofactor.

The catalysed reaction is Endonucleolytic cleavage to 5'-phosphooligonucleotide end-products.. Its function is as follows. Endonuclease IV plays a role in DNA repair. It cleaves phosphodiester bonds at apurinic or apyrimidinic (AP) sites, generating a 3'-hydroxyl group and a 5'-terminal sugar phosphate. The protein is Probable endonuclease 4 of Mycoplasmopsis agalactiae (strain NCTC 10123 / CIP 59.7 / PG2) (Mycoplasma agalactiae).